The sequence spans 356 residues: Peptide chain release factor 1 (356 aa).

Gln-232 carries the N5-methylglutamine modification. A disordered region spans residues Glu-281–Ser-301.

It belongs to the prokaryotic/mitochondrial release factor family. Post-translationally, methylated by PrmC. Methylation increases the termination efficiency of RF1.

The protein localises to the cytoplasm. Peptide chain release factor 1 directs the termination of translation in response to the peptide chain termination codons UAG and UAA. In Desulfovibrio desulfuricans (strain ATCC 27774 / DSM 6949 / MB), this protein is Peptide chain release factor 1.